Here is a 420-residue protein sequence, read N- to C-terminus: UDP-N-acetylglucosamine 1-carboxyvinyltransferase (420 aa).

A phosphoenolpyruvate-binding site is contributed by 22–23; it reads KN. Arg-92 lines the UDP-N-acetyl-alpha-D-glucosamine pocket. Cys-116 serves as the catalytic Proton donor. At Cys-116 the chain carries 2-(S-cysteinyl)pyruvic acid O-phosphothioketal. Residues 121–125, Asp-304, and Ile-326 each bind UDP-N-acetyl-alpha-D-glucosamine; that span reads RPVDQ.

This sequence belongs to the EPSP synthase family. MurA subfamily.

The protein localises to the cytoplasm. The catalysed reaction is phosphoenolpyruvate + UDP-N-acetyl-alpha-D-glucosamine = UDP-N-acetyl-3-O-(1-carboxyvinyl)-alpha-D-glucosamine + phosphate. Its pathway is cell wall biogenesis; peptidoglycan biosynthesis. Its function is as follows. Cell wall formation. Adds enolpyruvyl to UDP-N-acetylglucosamine. The sequence is that of UDP-N-acetylglucosamine 1-carboxyvinyltransferase from Paraburkholderia phytofirmans (strain DSM 17436 / LMG 22146 / PsJN) (Burkholderia phytofirmans).